We begin with the raw amino-acid sequence, 178 residues long: MSRIGKKPVVIPSGVTISVAAGNKVEVKGAKATLSKTFSTDVTFSVADNVATITPNNNSKNAIAQSGTARAILSNMVEGVSKGFERKLKIIGVGYRAKAQGNELNLTLGFSHPVVYKLPQGITAETPAPTEIILKGADKELLGKVASEIREYRKPEPYKGKGVRYEDEYVAKKEAKKK.

This sequence belongs to the universal ribosomal protein uL6 family. Part of the 50S ribosomal subunit.

Functionally, this protein binds to the 23S rRNA, and is important in its secondary structure. It is located near the subunit interface in the base of the L7/L12 stalk, and near the tRNA binding site of the peptidyltransferase center. This Francisella tularensis subsp. novicida (strain U112) protein is Large ribosomal subunit protein uL6.